Consider the following 155-residue polypeptide: Transcriptional repressor NrdR (155 aa).

A zinc finger lies at 3–34 (CPYCGHLEDRVVDSRETQDGQATRRRRACLSC). An ATP-cone domain is found at 49–139 (PQVVKKDGRR…VYRAFRDVGE (91 aa)).

This sequence belongs to the NrdR family. Zn(2+) serves as cofactor.

Its function is as follows. Negatively regulates transcription of bacterial ribonucleotide reductase nrd genes and operons by binding to NrdR-boxes. The polypeptide is Transcriptional repressor NrdR (Anaeromyxobacter sp. (strain K)).